We begin with the raw amino-acid sequence, 461 residues long: Bifunctional protein GlmU (461 aa).

The pyrophosphorylase stretch occupies residues 1 to 229 (MEKYVVVLAA…FSESLGVNDR (229 aa)). UDP-N-acetyl-alpha-D-glucosamine-binding positions include 8-11 (LAAG), K22, Q72, and 77-78 (GT). D102 is a binding site for Mg(2+). UDP-N-acetyl-alpha-D-glucosamine-binding residues include G139, E154, N169, and N227. N227 contacts Mg(2+). Positions 230-250 (VALAQATKTMQRRINEAHMRD) are linker. The segment at 251–461 (GVSFIDPDTA…LPLSKDKDWE (211 aa)) is N-acetyltransferase. Residues R332 and K350 each coordinate UDP-N-acetyl-alpha-D-glucosamine. H362 serves as the catalytic Proton acceptor. Residues Y365 and N376 each contribute to the UDP-N-acetyl-alpha-D-glucosamine site. Residues 385–386 (NY), A422, and R439 each bind acetyl-CoA.

The protein in the N-terminal section; belongs to the N-acetylglucosamine-1-phosphate uridyltransferase family. This sequence in the C-terminal section; belongs to the transferase hexapeptide repeat family. In terms of assembly, homotrimer. It depends on Mg(2+) as a cofactor.

It is found in the cytoplasm. It carries out the reaction alpha-D-glucosamine 1-phosphate + acetyl-CoA = N-acetyl-alpha-D-glucosamine 1-phosphate + CoA + H(+). It catalyses the reaction N-acetyl-alpha-D-glucosamine 1-phosphate + UTP + H(+) = UDP-N-acetyl-alpha-D-glucosamine + diphosphate. Its pathway is nucleotide-sugar biosynthesis; UDP-N-acetyl-alpha-D-glucosamine biosynthesis; N-acetyl-alpha-D-glucosamine 1-phosphate from alpha-D-glucosamine 6-phosphate (route II): step 2/2. It functions in the pathway nucleotide-sugar biosynthesis; UDP-N-acetyl-alpha-D-glucosamine biosynthesis; UDP-N-acetyl-alpha-D-glucosamine from N-acetyl-alpha-D-glucosamine 1-phosphate: step 1/1. The protein operates within bacterial outer membrane biogenesis; LPS lipid A biosynthesis. In terms of biological role, catalyzes the last two sequential reactions in the de novo biosynthetic pathway for UDP-N-acetylglucosamine (UDP-GlcNAc). The C-terminal domain catalyzes the transfer of acetyl group from acetyl coenzyme A to glucosamine-1-phosphate (GlcN-1-P) to produce N-acetylglucosamine-1-phosphate (GlcNAc-1-P), which is converted into UDP-GlcNAc by the transfer of uridine 5-monophosphate (from uridine 5-triphosphate), a reaction catalyzed by the N-terminal domain. The protein is Bifunctional protein GlmU of Lactobacillus helveticus (strain DPC 4571).